A 35-amino-acid chain; its full sequence is Mu-theraphotoxin-Hd1a (35 aa).

Disulfide bonds link cysteine 2-cysteine 17, cysteine 9-cysteine 24, and cysteine 16-cysteine 31.

This sequence belongs to the neurotoxin 10 (Hwtx-1) family. 22 (Htx-4) subfamily. Expressed by the venom gland.

Its subcellular location is the secreted. Its function is as follows. Gating-modifier toxin that reversibly and voltage-independently inhibits human Nav1.1/SCN1A and Nav1.7/SCN9A (IC(50)=111 nM). It also shows moderate inhibition on Nav1.2/SCN2A (1 uM inhibits current by 55%), Nav1.6/SCN8A (31%), Nav1.3/SCN5A (27%) and Nav1.4/SCN4A (23%). This toxin inhibits Nav1.7/SCN9A by interacting with the S3b-S4 paddle motif in channel domain II. In Cyriopagopus doriae (Tarantula spider), this protein is Mu-theraphotoxin-Hd1a.